The chain runs to 191 residues: UPF0312 protein Sputcn32_2702 (191 aa).

The signal sequence occupies residues 1 to 22; sequence MKKQLLSALIGVSLLAPMAASA.

The protein belongs to the UPF0312 family. Type 1 subfamily.

Its subcellular location is the periplasm. In Shewanella putrefaciens (strain CN-32 / ATCC BAA-453), this protein is UPF0312 protein Sputcn32_2702.